The chain runs to 473 residues: Gamma-aminobutyric acid receptor subunit beta-3 (473 aa).

An N-terminal signal peptide occupies residues 1–25; that stretch reads MWGLAGGRLFGIFSAPVLVAVVCCA. The Extracellular segment spans residues 26–246; that stretch reads QSVNDPGNMS…FRLKRNIGYF (221 aa). Residues Asn33 and Asn105 are each glycosylated (N-linked (GlcNAc...) asparagine). 120 to 122 contributes to the benzamidine binding site; the sequence is DTY. A 4-aminobutanoate-binding site is contributed by Tyr122. Residue Tyr122 coordinates histamine. Cys161 and Cys175 are oxidised to a cystine. N-linked (GlcNAc...) asparagine glycosylation occurs at Asn174. 2 residues coordinate 4-aminobutanoate: Glu180 and Tyr182. Residues 180-182 and Phe225 each bind benzamidine; that span reads ESY. Position 181-182 (181-182) interacts with histamine; sequence SY. A 4-aminobutanoate-binding site is contributed by Thr227. Thr227 lines the histamine pocket. A helical membrane pass occupies residues 247–267; the sequence is ILQTYMPSILITILSWVSFWI. Residues 268-271 lie on the Cytoplasmic side of the membrane; that stretch reads NYDA. A helical transmembrane segment spans residues 272 to 292; the sequence is SAARVALGITTVLTMTTINTH. The Extracellular segment spans residues 293 to 304; the sequence is LRETLPKIPYVK. The chain crosses the membrane as a helical span at residues 305–328; the sequence is AIDMYLMGCFVFVFLALLEYAFVN. Topologically, residues 329–447 are cytoplasmic; the sequence is YIFFGRGPQR…KIPDLTDVNA (119 aa). The chain crosses the membrane as a helical span at residues 448 to 470; sequence IDRWSRIVFPFTFSLFNLVYWLY. At 471–473 the chain is on the extracellular side; that stretch reads YVN.

It belongs to the ligand-gated ion channel (TC 1.A.9) family. Gamma-aminobutyric acid receptor (TC 1.A.9.5) subfamily. GABRB3 sub-subfamily. Heteropentamer, formed by a combination of alpha (GABRA1-6), beta (GABRB1-3), gamma (GABRG1-3), delta (GABRD), epsilon (GABRE), rho (GABRR1-3), pi (GABRP) and theta (GABRQ) chains, each subunit exhibiting distinct physiological and pharmacological properties. Can form functional homopentamers (in vitro). Interacts with UBQLN1. May interact with KIF21B. Identified in a complex of 720 kDa composed of LHFPL4, NLGN2, GABRA1, GABRB2, GABRG2 and GABRB3. Interacts with LHFPL4. Interacts with GIT1; this interaction is required for synaptic GABRB3 surface stability and inhibitory synapse strength.

It localises to the postsynaptic cell membrane. It is found in the cell membrane. The protein resides in the cytoplasmic vesicle membrane. It catalyses the reaction chloride(in) = chloride(out). Potentiated by histamine. Its function is as follows. Beta subunit of the heteropentameric ligand-gated chloride channel gated by gamma-aminobutyric acid (GABA), a major inhibitory neurotransmitter in the brain. GABA-gated chloride channels, also named GABA(A) receptors (GABAAR), consist of five subunits arranged around a central pore and contain GABA active binding site(s) located at the alpha and beta subunit interface(s). GABAARs containing beta-3/GABRB3 subunit are found at both synaptic and extrasynaptic sites. When activated by GABA, GABAARs selectively allow the flow of chloride anions across the cell membrane down their electrochemical gradient. Chloride influx into the postsynaptic neuron following GABAAR opening decreases the neuron ability to generate a new action potential, thereby reducing nerve transmission. GABAARs containing alpha-1 and beta-3 subunits exhibit synaptogenic activity; the gamma-2 subunit being necessary but not sufficient to induce rapid synaptic contacts formation. Extrasynaptic beta-3 receptors contribute to the tonic GABAergic inhibition. GABAARs containing alpha-1, beta-3 and epsilon subunits may also permit spontaneous chloride channel activity while preserving the structural information required for GABA-gated openings. Beta-containing GABAARs can simultaneously bind GABA and histamine where histamine binds at the interface of two neighboring beta subunits, which may be involved in the regulation of sleep and wakefulness. Plays an important role in somatosensation and in the production of antinociception. In Homo sapiens (Human), this protein is Gamma-aminobutyric acid receptor subunit beta-3.